The chain runs to 98 residues: Class II hydrophobin 5 (98 aa).

An N-terminal signal peptide occupies residues 1 to 17 (MQFSLALVTLLATAVSA). 4 cysteine pairs are disulfide-bonded: C30/C78, C39/C69, C40/C52, and C79/C90.

This sequence belongs to the cerato-ulmin hydrophobin family.

Its subcellular location is the secreted. The protein resides in the cell wall. Functionally, aerial growth, conidiation, and dispersal of filamentous fungi in the environment rely upon a capability of their secreting small amphipathic proteins called hydrophobins (HPBs) with low sequence identity. Class I can self-assemble into an outermost layer of rodlet bundles on aerial cell surfaces, conferring cellular hydrophobicity that supports fungal growth, development and dispersal; whereas Class II form highly ordered films at water-air interfaces through intermolecular interactions but contribute nothing to the rodlet structure. Does not seem to be important for the ability to cause seedling disease. This chain is Class II hydrophobin 5, found in Gibberella moniliformis (Maize ear and stalk rot fungus).